The primary structure comprises 392 residues: Cellobiose 2-epimerase (392 aa).

This sequence belongs to the cellobiose 2-epimerase family.

The enzyme catalyses D-cellobiose = beta-D-glucosyl-(1-&gt;4)-D-mannopyranose. Catalyzes the reversible epimerization of cellobiose to 4-O-beta-D-glucopyranosyl-D-mannose (Glc-Man). Can also epimerize cellotriose to Glc-Glc-Man, cellotetraose to Glc-Glc-Glc-Man, lactose to epilactose, and mannobiose to 4-O-beta-D-mannopyranosyl-D-glucopyranose (Man-Glc). May function as a mannobiose 2-epimerase in vivo and be involved in a mannan catabolic pathway which feeds into glycolysis. This is Cellobiose 2-epimerase (bfce) from Bacteroides fragilis (strain ATCC 25285 / DSM 2151 / CCUG 4856 / JCM 11019 / LMG 10263 / NCTC 9343 / Onslow / VPI 2553 / EN-2).